The primary structure comprises 207 residues: Protein GrpE (207 aa).

2 stretches are compositionally biased toward basic and acidic residues: residues 1 to 11 (MEENRDVKNEE) and 57 to 66 (DLVKNQEEEN). The tract at residues 1–66 (MEENRDVKNE…DLVKNQEEEN (66 aa)) is disordered.

It belongs to the GrpE family. As to quaternary structure, homodimer.

The protein resides in the cytoplasm. Participates actively in the response to hyperosmotic and heat shock by preventing the aggregation of stress-denatured proteins, in association with DnaK and GrpE. It is the nucleotide exchange factor for DnaK and may function as a thermosensor. Unfolded proteins bind initially to DnaJ; upon interaction with the DnaJ-bound protein, DnaK hydrolyzes its bound ATP, resulting in the formation of a stable complex. GrpE releases ADP from DnaK; ATP binding to DnaK triggers the release of the substrate protein, thus completing the reaction cycle. Several rounds of ATP-dependent interactions between DnaJ, DnaK and GrpE are required for fully efficient folding. In Clostridium beijerinckii (strain ATCC 51743 / NCIMB 8052) (Clostridium acetobutylicum), this protein is Protein GrpE.